A 346-amino-acid chain; its full sequence is Autophagy-related protein 3 (346 aa).

The tract at residues 85-161 (DFAGDAGHEE…DDDDEAIIRA (77 aa)) is flexible region. Catalysis depends on Cys238, which acts as the Glycyl thioester intermediate. The segment at 242 to 322 (SVMKTLLDRA…DQEVAIRVDQ (81 aa)) is handle region.

The protein belongs to the ATG3 family. In terms of assembly, monomer. Interacts with apg-6/atg8 through an intermediate thioester bond through the C-terminal Gly of apg-6/atg8. Also interacts with the 40 amino acid C-terminal region of the E1-like apg-5/atg7 enzyme. Also interacts with the atg12-apg-4/atg5 conjugate.

The protein resides in the cytoplasm. Functionally, E2 conjugating enzyme required for the cytoplasm to vacuole transport (Cvt) and autophagy. Required for selective autophagic degradation of the nucleus (nucleophagy) as well as for mitophagy which contributes to regulate mitochondrial quantity and quality by eliminating the mitochondria to a basal level to fulfill cellular energy requirements and preventing excess ROS production. Responsible for the E2-like covalent binding of phosphatidylethanolamine to the C-terminal Gly of apg-6/atg8. The atg12-apg-4/atg5 conjugate plays a role of an E3 and promotes the transfer of apg-6/atg8 from apg-3/atg3 to phosphatidylethanolamine (PE). This step is required for the membrane association of apg-6/atg8. The formation of the apg-6/atg8-phosphatidylethanolamine conjugate is essential for autophagy and for the cytoplasm to vacuole transport (Cvt). The apg-6/atg8-PE conjugate mediates tethering between adjacent membranes and stimulates membrane hemifusion, leading to expansion of the autophagosomal membrane during autophagy. This Neurospora crassa (strain ATCC 24698 / 74-OR23-1A / CBS 708.71 / DSM 1257 / FGSC 987) protein is Autophagy-related protein 3 (apg-3).